Here is a 96-residue protein sequence, read N- to C-terminus: UPF0235 protein YggU (96 aa).

The protein belongs to the UPF0235 family.

The polypeptide is UPF0235 protein YggU (Salmonella typhi).